Reading from the N-terminus, the 606-residue chain is Mitogen-activated protein kinase kinase kinase 7 (606 aa).

Residues 1–300 are interaction with MAPK8IP1; it reads MSTASAASSS…FPGADEPLQY (300 aa). In terms of domain architecture, Protein kinase spans 36–291; sequence IEVEEVVGRG…KIMTHLMRYF (256 aa). ATP contacts are provided by residues 42–50 and lysine 63; that span reads VGRGAFGVV. Residue lysine 72 forms a Glycyl lysine isopeptide (Lys-Gly) (interchain with G-Cter in ubiquitin) linkage. Catalysis depends on aspartate 156, which acts as the Proton acceptor. A Glycyl lysine isopeptide (Lys-Gly) (interchain with G-Cter in ubiquitin) cross-link involves residue lysine 158. (Microbial infection) O-acetylthreonine; by Yersinia YopJ; alternate occurs at positions 184 and 187. 2 positions are modified to phosphothreonine; by autocatalysis; alternate: threonine 184 and threonine 187. Serine 192 carries the phosphoserine; by autocatalysis modification. Lysine 209 participates in a covalent cross-link: Glycyl lysine isopeptide (Lys-Gly) (interchain with G-Cter in ubiquitin). Positions 301 to 338 are disordered; it reads PCQYSDEGQSNSATSTGSFMDIASTNTSNKSDTNMEQV. Positions 306 to 338 are enriched in polar residues; the sequence is DEGQSNSATSTGSFMDIASTNTSNKSDTNMEQV. Threonine 341 is modified ((Microbial infection) O-acetylthreonine; by Yersinia YopJ; alternate). A disordered region spans residues 354 to 391; sequence KNQAKQQSESGRLSLGASRGSSVESLPPTSEGKRMSAD. The segment covering 361-375 has biased composition (low complexity); the sequence is SESGRLSLGASRGSS. Serine 367, serine 389, and serine 439 each carry phosphoserine. Residues 443-452 are compositionally biased toward polar residues; that stretch reads LTVTGTEPGQ. Residues 443–493 form a disordered region; sequence LTVTGTEPGQVSSRSSSPSVRMITTSGPTSEKPTRSHPWTPDDSTDTNGSD. Residues threonine 444, threonine 446, and threonine 448 each carry the (Microbial infection) O-acetylthreonine; by Yersinia YopJ; alternate modification. Residues 453 to 463 are compositionally biased toward low complexity; sequence VSSRSSSPSVR. Phosphoserine is present on serine 455. Polar residues predominate over residues 464 to 473; sequence MITTSGPTSE. At threonine 467 the chain carries (Microbial infection) O-acetylthreonine; by Yersinia YopJ; alternate.

Belongs to the protein kinase superfamily. STE Ser/Thr protein kinase family. MAP kinase kinase kinase subfamily. Can form homodimer. Binds both upstream activators and downstream substrates in multimolecular complexes. Interacts with TAB1/MAP3K7IP1, TAB2/MAP3K7IP2 and TAB3/MAP3K7IP3. Identified in the TRIKA2 complex composed of MAP3K7/TAK1, TAB1/MAP3K7IP1 and TAB2/MAP3K7IP2. Interacts with PPM1L and PPM1B/PP2CB. Interaction with PP2A and PPP6C leads to its repressed activity. Interacts with TRAF6 and TAB1/MAP3K7IP1; during IL-1 signaling. Interacts with TAOK1 and TAOK2; interaction with TAOK2 interferes with MAP3K7 interaction with IKKA, thus preventing NF-kappa-B activation. Interacts with DYNC2I2 (via WD domains). Interacts with CYLD and RBCK1. Interacts with TGFBR1; induces MAP3K7/TAK1 activation by TRAF6. Interacts with MAPK8IP1 and SMAD6. Interacts with isoform 1 of VRK2. Interacts with DAB2; the interaction is induced by TGF-beta stimulation and may mediate TGF-beta stimulated JNK activation. Interacts with TRIM5. Part of a complex containing ITCH, NDFIP1 and MAP3K7. Interacts with IFIT5; the interaction synergizes the recruitment of IKK to MAP3K7 and enhances IKK phosphorylation. Interacts with PLEKHM1 (via N- and C-terminus). Interacts with TRIM8. Found in a complex with SH3RF1, RAC2, MAP2K7/MKK7, MAPK8IP1/JIP1, MAPK8/JNK1 and MAPK9/JNK2. Interacts with SASH1. Interacts with RIPK1. In terms of assembly, (Microbial infection) Interacts with herpes simplex virus 2 protein US2; this interaction induces MAP3K7 phosphorylation and subsequent activation. Mg(2+) is required as a cofactor. Post-translationally, association with TAB1/MAP3K7IP1 promotes autophosphorylation at Ser-192 and subsequent activation. Association with TAB2/MAP3K7IP2, itself associated with free unanchored Lys-63 polyubiquitin chain, promotes autophosphorylation and subsequent activation of MAP3K7. Dephosphorylation at Ser-192 by PPM1B/PP2CB and at Thr-187 by PP2A and PPP6C leads to inactivation. In terms of processing, 'Lys-48'-linked polyubiquitination at Lys-72 is induced by TNFalpha, and leads to proteasomal degradation. Undergoes 'Lys-48'-linked polyubiquitination catalyzed by ITCH. Requires 'Lys-63'-linked polyubiquitination for autophosphorylation and subsequent activation. 'Lys-63'-linked ubiquitination does not lead to proteasomal degradation. Deubiquitinated by CYLD, a protease that selectively cleaves 'Lys-63'-linked ubiquitin chains. Deubiquitinated by Y.enterocolitica YopP. Deubiquitinated by USP19; leading to negative regulation of TNF-alpha- and IL-1beta-triggered NF-kappa-B activation. (Microbial infection) Cleaved and inactivated by the proteases 3C of coxsackievirus A16 and human enterovirus D68, allowing the virus to disrupt TRAF6-triggered NF-kappa-B induction. Post-translationally, (Microbial infection) Acetylation of Thr-184 and Thr-187 by Yersinia YopJ prevents phosphorylation and activation, thus blocking the MAPK signaling pathway. Isoform 1A is the most abundant in ovary, skeletal muscle, spleen and blood mononuclear cells. Isoform 1B is highly expressed in brain, kidney and small intestine. Isoform 1C is the major form in prostate. Isoform 1D is the less abundant form.

Its subcellular location is the cytoplasm. It is found in the cell membrane. It carries out the reaction L-seryl-[protein] + ATP = O-phospho-L-seryl-[protein] + ADP + H(+). It catalyses the reaction L-threonyl-[protein] + ATP = O-phospho-L-threonyl-[protein] + ADP + H(+). Activated by pro-inflammatory cytokines and in response to physical and chemical stresses, including osmotic stress, oxidative stress, arsenic and ultraviolet light irradiation. Activated by 'Lys-63'-linked polyubiquitination and by autophosphorylation. Association with TAB1/MAP3K7IP1 and TAB2/MAP3K7IP2 promotes activation through autophosphorylation, whereas PPM1B/PP2CB, PP2A and PPP6C dephosphorylation leads to inactivation. Ceramides are also able to activate MAP3K7/TAK1. Its function is as follows. Serine/threonine kinase which acts as an essential component of the MAP kinase signal transduction pathway. Plays an important role in the cascades of cellular responses evoked by changes in the environment. Mediates signal transduction of TRAF6, various cytokines including interleukin-1 (IL-1), transforming growth factor-beta (TGFB), TGFB-related factors like BMP2 and BMP4, toll-like receptors (TLR), tumor necrosis factor receptor CD40 and B-cell receptor (BCR). Once activated, acts as an upstream activator of the MKK/JNK signal transduction cascade and the p38 MAPK signal transduction cascade through the phosphorylation and activation of several MAP kinase kinases like MAP2K1/MEK1, MAP2K3/MKK3, MAP2K6/MKK6 and MAP2K7/MKK7. These MAP2Ks in turn activate p38 MAPKs and c-jun N-terminal kinases (JNKs); both p38 MAPK and JNK pathways control the transcription factors activator protein-1 (AP-1). Independently of MAP2Ks and p38 MAPKs, acts as a key activator of NF-kappa-B by promoting activation of the I-kappa-B-kinase (IKK) core complex. Mechanistically, recruited to polyubiquitin chains of RIPK2 and IKBKG/NEMO via TAB2/MAP3K7IP2 and TAB3/MAP3K7IP3, and catalyzes phosphorylation and activation of IKBKB/IKKB component of the IKK complex, leading to NF-kappa-B activation. In osmotic stress signaling, plays a major role in the activation of MAPK8/JNK1, but not that of NF-kappa-B. Promotes TRIM5 capsid-specific restriction activity. Phosphorylates RIPK1 at 'Ser-321' which positively regulates RIPK1 interaction with RIPK3 to promote necroptosis but negatively regulates RIPK1 kinase activity and its interaction with FADD to mediate apoptosis. Phosphorylates STING1 in response to cGAMP-activation, promoting association between STEEP1 and STING1 and STING1 translocation to COPII vesicles. This is Mitogen-activated protein kinase kinase kinase 7 from Homo sapiens (Human).